The primary structure comprises 1573 residues: Mediator of RNA polymerase II transcription subunit 1 (1573 aa).

The LXXLL motif 1 signature appears at 588-592 (LTSLL). Disordered stretches follow at residues 595–691 (TSNS…EDDF), 774–883 (SKLP…FKDF), and 928–1564 (LGGP…GDDD). Pro residues predominate over residues 606–617 (PTPPQHTPPPAS). The LXXLL motif 2 motif lies at 629–633 (LMNLL). Residues 651–668 (ERQNSSGSPRTELGSSAS) are compositionally biased toward polar residues. Residues 678-691 (TGTEKMKNQTEDDF) are compositionally biased toward basic and acidic residues. 3 stretches are compositionally biased toward polar residues: residues 791–804 (RDSSSSGHSQSTLF), 835–864 (GSPNSDSPNTFFNSVDFNPDLLNSQSQSGF), and 934–944 (QETQSRSQSPL). Residues 949–961 (LGKDRPQKQKVKE) are compositionally biased toward basic and acidic residues. Residues 963 to 973 (GNGGGAGGGLS) show a composition bias toward gly residues. Composition is skewed to low complexity over residues 1025-1038 (PTSTGGSKSPGTSG), 1053-1085 (KITIQIPKGTMSVGKPSSHSQYSSSGSSSSSSS), 1092-1116 (SSLSSSASGKIKSNKSDGSSGMKIG), 1124-1143 (SGQSGQSNSQSKNSSQSMGK), and 1155-1164 (SSNVNNSSGS). Positions 1176 to 1193 (MNPSLSKPNISPSHSRPS) are enriched in polar residues. Residues 1226–1277 (LSGSGSNSTTKSSSGLVSSGSLTQKPNSSSSSSSSSSSSSSSSSSSSSSFSS) show a composition bias toward low complexity. The span at 1278–1290 (GVSQNLHSSSKGK) shows a compositional bias: polar residues. Basic and acidic residues predominate over residues 1350 to 1362 (PTKREKGEKDKSK). Polar residues-rich tracts occupy residues 1420-1435 (SQMQKNYGSPLISGST) and 1443-1457 (PSHNKSPAYTPQALD). The span at 1461 to 1471 (ESGSSSIAEKS) shows a compositional bias: low complexity. Over residues 1496–1505 (KHKKHKKEKK) the composition is skewed to basic residues. A compositionally biased stretch (basic and acidic residues) spans 1506–1518 (RLKDKDRDREKKK).

It belongs to the Mediator complex subunit 1 family. Component of the Mediator complex.

The protein localises to the nucleus. Functionally, component of the Mediator complex, a coactivator involved in the regulated transcription of nearly all RNA polymerase II-dependent genes. Mediator functions as a bridge to convey information from gene-specific regulatory proteins to the basal RNA polymerase II transcription machinery. Mediator is recruited to promoters by direct interactions with regulatory proteins and serves as a scaffold for the assembly of a functional preinitiation complex with RNA polymerase II and the general transcription factors. The sequence is that of Mediator of RNA polymerase II transcription subunit 1 (med1) from Xenopus tropicalis (Western clawed frog).